The following is a 282-amino-acid chain: 4-diphosphocytidyl-2-C-methyl-D-erythritol kinase (282 aa).

Lys-9 is an active-site residue. 98–108 contributes to the ATP binding site; sequence PMGGGLGGGSS. Asp-140 is a catalytic residue.

It belongs to the GHMP kinase family. IspE subfamily. In terms of assembly, homodimer.

The enzyme catalyses 4-CDP-2-C-methyl-D-erythritol + ATP = 4-CDP-2-C-methyl-D-erythritol 2-phosphate + ADP + H(+). It functions in the pathway isoprenoid biosynthesis; isopentenyl diphosphate biosynthesis via DXP pathway; isopentenyl diphosphate from 1-deoxy-D-xylulose 5-phosphate: step 3/6. Its function is as follows. Catalyzes the phosphorylation of the position 2 hydroxy group of 4-diphosphocytidyl-2C-methyl-D-erythritol. This Salmonella agona (strain SL483) protein is 4-diphosphocytidyl-2-C-methyl-D-erythritol kinase.